We begin with the raw amino-acid sequence, 286 residues long: ATP synthase gamma chain (286 aa).

This sequence belongs to the ATPase gamma chain family. In terms of assembly, F-type ATPases have 2 components, CF(1) - the catalytic core - and CF(0) - the membrane proton channel. CF(1) has five subunits: alpha(3), beta(3), gamma(1), delta(1), epsilon(1). CF(0) has three main subunits: a, b and c.

The protein localises to the cell inner membrane. Its function is as follows. Produces ATP from ADP in the presence of a proton gradient across the membrane. The gamma chain is believed to be important in regulating ATPase activity and the flow of protons through the CF(0) complex. This Pseudomonas syringae pv. tomato (strain ATCC BAA-871 / DC3000) protein is ATP synthase gamma chain.